Consider the following 344-residue polypeptide: Follistatin (344 aa).

The signal sequence occupies residues 1–29 (MVRPRHQPGGLCLLLLLLCQFMEDRSAQA). Residues 30–103 (GNCWLRQAKN…TCDNVDCGPG (74 aa)) form the TB domain. 18 disulfide bridges follow: cysteine 32–cysteine 55, cysteine 42–cysteine 88, cysteine 56–cysteine 91, cysteine 95–cysteine 106, cysteine 100–cysteine 116, cysteine 118–cysteine 150, cysteine 122–cysteine 143, cysteine 132–cysteine 164, cysteine 168–cysteine 179, cysteine 173–cysteine 189, cysteine 192–cysteine 225, cysteine 196–cysteine 218, cysteine 207–cysteine 239, cysteine 245–cysteine 256, cysteine 250–cysteine 267, cysteine 270–cysteine 302, cysteine 274–cysteine 295, and cysteine 284–cysteine 316. The region spanning 94–117 (TCDNVDCGPGKKCRMNKKNKPRCV) is the Follistatin-like 1 domain. The Kazal-like 1 domain occupies 112–166 (NKPRCVCAPDCSNITWKGPVCGLDGKTYRNECALLKARCKEQPELEVQYQGKCKK). A glycan (N-linked (GlcNAc...) asparagine) is linked at asparagine 124. One can recognise a Follistatin-like 2 domain in the interval 167-190 (TCRDVNCPGSSTCVVDQTNNAYCV). One can recognise a Kazal-like 2 domain in the interval 186-241 (NAYCVTCNRICPEPTSSEQYLCGNDGVTYSSACHLRKATCLLGRSIGLAYEGKCIK). A Follistatin-like 3 domain is found at 244 to 268 (SCEDIQCTGGKKCLWDFKVGRGRCS). Residues 264 to 318 (RGRCSLCDELCPDSKSEEPVCASDNATYASECAMKEAACSSGVLLEVKHSGSCNS) enclose the Kazal-like 3 domain. A glycan (N-linked (GlcNAc...) asparagine) is linked at asparagine 288. The interval 314-344 (GSCNSISEDTEEEEEDEDQDYSFPISSILEW) is disordered. A compositionally biased stretch (acidic residues) spans 321–333 (EDTEEEEEDEDQD).

In terms of assembly, interacts with GDF11. Interacts with activin A/INHBA. Interacts with myostatin/MSTN.

Its subcellular location is the secreted. It is found in the nucleus. The protein localises to the nucleolus. In terms of biological role, multifunctional regulatory protein whose primary function is to antagonize members of the transforming growth factor beta (TGF-beta) superfamily including activin, myostatin, GDF11 or bone morphogenetic proteins (BMPs). Mechanistically, binds to these ligands in the extracellular space, blocking their type II receptor-binding site to inhibit downstream signaling. Plays an essential role in muscle fiber formation and growth both by preventing the repressive effects of myostatin and through SMAD3/AKT/mTOR signaling independently of myostatin. Also promotes neural differentiation by antagonizing the action BMP4. Acts as a specific inhibitor of the biosynthesis and secretion of pituitary follicle stimulating hormone (FSH) by sequestering activin A/INHBA. On the other hand, translocates into the nucleus where it down-regulates rRNA synthesis and ribosome biogenesis to maintain cellular energy homeostasis by binding to rDNA. The chain is Follistatin from Equus caballus (Horse).